We begin with the raw amino-acid sequence, 480 residues long: Phenylalanine--tRNA ligase alpha subunit (480 aa).

The L-phenylalanine site is built by Thr324 and Phe407. Residue Glu409 participates in Mg(2+) binding. Phe432 is an L-phenylalanine binding site.

It belongs to the class-II aminoacyl-tRNA synthetase family. Phe-tRNA synthetase alpha subunit type 2 subfamily. As to quaternary structure, tetramer of two alpha and two beta subunits. Mg(2+) serves as cofactor.

It localises to the cytoplasm. It catalyses the reaction tRNA(Phe) + L-phenylalanine + ATP = L-phenylalanyl-tRNA(Phe) + AMP + diphosphate + H(+). This is Phenylalanine--tRNA ligase alpha subunit from Methanocaldococcus jannaschii (strain ATCC 43067 / DSM 2661 / JAL-1 / JCM 10045 / NBRC 100440) (Methanococcus jannaschii).